We begin with the raw amino-acid sequence, 287 residues long: MKRIFLLIATNMAILLVASIVMSILGVNTSTMSGLLVFAAIFGFGGAFISLAISKWMAKKTMGCEVITNPRDNTERWLVETVARQAEQAGIKMPEVAIYQSQEFNAFATGPSKNNSLVAVSSGLLYGMNHDEIEAVLAHEVSHVANGDMVTLTLIQGVVNTFVIFAARVVAGIINNFVASNDEEGEGLGMFAYMAVVFVLDMLFGILASIIVAYFSRIREFKADEGGARLAGKEKMIAALDRLKQGPETGAMPASMSALGINGKKSMAELMMSHPPLDKRIAALRAS.

The next 2 helical transmembrane spans lie at 4–24 (IFLL…VMSI) and 33–53 (SGLL…SLAI). His-139 is a Zn(2+) binding site. Residue Glu-140 is part of the active site. His-143 provides a ligand contact to Zn(2+). 2 helical membrane-spanning segments follow: residues 154–174 (LIQG…AGII) and 195–215 (AVVF…VAYF). Glu-220 contributes to the Zn(2+) binding site.

Belongs to the peptidase M48B family. Requires Zn(2+) as cofactor.

The protein resides in the cell inner membrane. In Shewanella piezotolerans (strain WP3 / JCM 13877), this protein is Protease HtpX.